Reading from the N-terminus, the 497-residue chain is Putative BTB/POZ domain-containing protein R738 (497 aa).

One can recognise a BTB domain in the interval 16–86 (SDCKLVLDDG…FYEKSNVINA (71 aa)).

Belongs to the mimivirus BTB/WD family.

This Acanthamoeba polyphaga (Amoeba) protein is Putative BTB/POZ domain-containing protein R738.